Here is a 546-residue protein sequence, read N- to C-terminus: Methionine--tRNA ligase (546 aa).

Positions 15–25 (PYANGPIHLGH) match the 'HIGH' region motif. The Zn(2+) site is built by Cys-146, Cys-149, Cys-159, and Cys-162. The 'KMSKS' region signature appears at 332–336 (KMSKS). Lys-335 contributes to the ATP binding site.

It belongs to the class-I aminoacyl-tRNA synthetase family. MetG type 1 subfamily. Monomer. Requires Zn(2+) as cofactor.

The protein resides in the cytoplasm. The catalysed reaction is tRNA(Met) + L-methionine + ATP = L-methionyl-tRNA(Met) + AMP + diphosphate. Functionally, is required not only for elongation of protein synthesis but also for the initiation of all mRNA translation through initiator tRNA(fMet) aminoacylation. This Coxiella burnetii (strain RSA 331 / Henzerling II) protein is Methionine--tRNA ligase.